Consider the following 288-residue polypeptide: MRILIITGLSGSGKSTAVRALEDEGFFCQDNLPVMLFPTFVELVDKAKERVRDVALVMDIRGRDFHAGYEKVFQEISEAGHFVEILFFDATDEVLIRRFSETRRRHPAMESGSVPEGIRYEREQLAGLRRLATMIIDTSELNVHQLRELVISHVKGNHGGREMTIHLQSFGYRYGIPLESDLVMDVRFLPNPYFVPELKEFSGLNPNVRDYVLKYEETRIFLNKFKEMLEFLLPGYRREGKSYLTVSIGCTGGRHRSVVITEEMRDFFRTKQLNLNVSHRDMKKGLEK.

8 to 15 (GLSGSGKS) contributes to the ATP binding site. 59 to 62 (DIRG) contributes to the GTP binding site.

The protein belongs to the RapZ-like family.

In terms of biological role, displays ATPase and GTPase activities. This chain is Nucleotide-binding protein Gura_2968, found in Geotalea uraniireducens (strain Rf4) (Geobacter uraniireducens).